The primary structure comprises 239 residues: Tumor protein p53-inducible nuclear protein 1 (239 aa).

Positions 25–37 (EKEDDEWILVDFI) match the LIR motif.

Interacts with p53/TP53 and HIPK2. Interacts with PRKCG, GABARAP, GABARAPL1, GABARAPL2, MAP1LC3A, MAP1LC3B and MAP1LC3C. In terms of tissue distribution, ubiquitously expressed with highest levels in the thymus.

It localises to the cytoplasm. The protein localises to the cytosol. Its subcellular location is the nucleus. It is found in the PML body. The protein resides in the cytoplasmic vesicle. It localises to the autophagosome. In terms of biological role, antiproliferative and proapoptotic protein involved in cell stress response which acts as a dual regulator of transcription and autophagy. Acts as a positive regulator of autophagy. In response to cellular stress or activation of autophagy, relocates to autophagosomes where it interacts with autophagosome-associated proteins GABARAP, GABARAPL1/L2, MAP1LC3A/B/C and regulates autophagy. Acts as an antioxidant and plays a major role in p53/TP53-driven oxidative stress response. Possesses both a p53/TP53-independent intracellular reactive oxygen species (ROS) regulatory function and a p53/TP53-dependent transcription regulatory function. Positively regulates p53/TP53 and p73/TP73 and stimulates their capacity to induce apoptosis and regulate cell cycle. In response to double-strand DNA breaks, promotes p53/TP53 phosphorylation on 'Ser-46' and subsequent apoptosis. Acts as a tumor suppressor by inducing cell death by an autophagy and caspase-dependent mechanism. Can reduce cell migration by regulating the expression of SPARC. This Mus musculus (Mouse) protein is Tumor protein p53-inducible nuclear protein 1 (Trp53inp1).